The primary structure comprises 359 residues: Histidinol-phosphate aminotransferase 1 (359 aa).

The residue at position 216 (lysine 216) is an N6-(pyridoxal phosphate)lysine.

Belongs to the class-II pyridoxal-phosphate-dependent aminotransferase family. Histidinol-phosphate aminotransferase subfamily. Homodimer. It depends on pyridoxal 5'-phosphate as a cofactor.

It carries out the reaction L-histidinol phosphate + 2-oxoglutarate = 3-(imidazol-4-yl)-2-oxopropyl phosphate + L-glutamate. It participates in amino-acid biosynthesis; L-histidine biosynthesis; L-histidine from 5-phospho-alpha-D-ribose 1-diphosphate: step 7/9. This is Histidinol-phosphate aminotransferase 1 (hisC1) from Caulobacter vibrioides (strain ATCC 19089 / CIP 103742 / CB 15) (Caulobacter crescentus).